A 247-amino-acid polypeptide reads, in one-letter code: MIYEKVAEELISSSYTIAFTGAGISTASGIPDFRGPQGLWKKYSPELASIEYFEKDPKNFWGFYSLRMRGLFEAQPNKAHYSLAELEKMGIIKVIITQNIDGLHQKAGSKNVIELHGTMRRSYCVLCLRTYDSLNVLSMIEKGNLPPRCDCGGIIRPDVVLFGEPVKNIYEALSIAYESDLVISIGSSLTVYPANLIPQTVKERGGKLIILNMEETPLDSIADYVVREPVEISLPKILENVRQKILS.

The 244-residue stretch at 1-244 folds into the Deacetylase sirtuin-type domain; sequence MIYEKVAEEL…PKILENVRQK (244 aa). A22, T26, F33, R34, Q98, I100, D101, and H116 together coordinate NAD(+). Residue F33 coordinates nicotinamide. The nicotinamide site is built by I100 and D101. The Proton acceptor role is filled by H116. Residues C124, C127, C149, and C151 each coordinate Zn(2+). NAD(+)-binding residues include S187, S188, N212, and V230.

It belongs to the sirtuin family. Class U subfamily. Monomer. Requires Zn(2+) as cofactor.

It is found in the cytoplasm. The enzyme catalyses N(6)-acetyl-L-lysyl-[protein] + NAD(+) + H2O = 2''-O-acetyl-ADP-D-ribose + nicotinamide + L-lysyl-[protein]. NAD-dependent protein deacetylase which modulates the activities of several enzymes which are inactive in their acetylated form. Deacetylates the N-terminal lysine residue of albA1, the major archaeal DNA compaction protein and that, in turn, increases albA1's DNA binding affinity, thereby repressing transcription. This Saccharolobus solfataricus (strain ATCC 35092 / DSM 1617 / JCM 11322 / P2) (Sulfolobus solfataricus) protein is NAD-dependent protein deacetylase.